A 105-amino-acid chain; its full sequence is MHKISLQFFFVDNYFFFWKQSKYQSIYAIQIRCFFLTVNRTPIPKQTFSLIVFYILIMIIQHLKEIHYLISASAKLLLASNYLLELLISHNIQFSPIRSFFIIMV.

Its function is as follows. Has a role in meiosis. The sequence is that of Meiotically up-regulated gene 52 protein (mug52) from Schizosaccharomyces pombe (strain 972 / ATCC 24843) (Fission yeast).